A 430-amino-acid chain; its full sequence is GTPase Obg (430 aa).

Residues 1–158 enclose the Obg domain; it reads MFIDKAKIYL…LTVVLELKLI (158 aa). An OBG-type G domain is found at 159-330; sequence ADVGLVGFPN…LLSYVSKRLK (172 aa). Residues 165-172, 190-194, 212-215, 282-285, and 311-313 contribute to the GTP site; these read GFPNVGKS, FTTLT, DIPG, NKTD, and SAA. Mg(2+) is bound by residues Ser172 and Thr192. An OCT domain is found at 351–430; it reads KYEETEDKYH…MYSVEFEYFN (80 aa).

The protein belongs to the TRAFAC class OBG-HflX-like GTPase superfamily. OBG GTPase family. As to quaternary structure, monomer. Requires Mg(2+) as cofactor.

It is found in the cytoplasm. Functionally, an essential GTPase which binds GTP, GDP and possibly (p)ppGpp with moderate affinity, with high nucleotide exchange rates and a fairly low GTP hydrolysis rate. Plays a role in control of the cell cycle, stress response, ribosome biogenesis and in those bacteria that undergo differentiation, in morphogenesis control. The sequence is that of GTPase Obg from Alkaliphilus oremlandii (strain OhILAs) (Clostridium oremlandii (strain OhILAs)).